The following is a 553-amino-acid chain: Phenylalanine--tRNA ligase beta subunit (553 aa).

Residues 273–349 (FNVRNIDIEV…RAFGYNNITP (77 aa)) form the B5 domain. Mg(2+)-binding residues include aspartate 327, aspartate 333, aspartate 336, and aspartate 337.

The protein belongs to the phenylalanyl-tRNA synthetase beta subunit family. Type 2 subfamily. In terms of assembly, tetramer of two alpha and two beta subunits. Mg(2+) is required as a cofactor.

It localises to the cytoplasm. It carries out the reaction tRNA(Phe) + L-phenylalanine + ATP = L-phenylalanyl-tRNA(Phe) + AMP + diphosphate + H(+). This Methanocella arvoryzae (strain DSM 22066 / NBRC 105507 / MRE50) protein is Phenylalanine--tRNA ligase beta subunit.